The chain runs to 498 residues: Pentatricopeptide repeat-containing protein At3g61360 (498 aa).

9 PPR repeats span residues 102-132 (TSDS…VRKD), 138-172 (SFKS…IFRK), 175-205 (GVDE…LHSR), 209-243 (DVKT…GFKP), 244-278 (NSVT…DFDI), 279-313 (TVQI…GLTP), 314-348 (DCGA…GIEP), 349-385 (DSVT…SLVP), and 386-420 (KTPT…GYCP).

This sequence belongs to the PPR family. P subfamily.

The sequence is that of Pentatricopeptide repeat-containing protein At3g61360 from Arabidopsis thaliana (Mouse-ear cress).